The chain runs to 362 residues: 3-dehydroquinate synthase (362 aa).

NAD(+) is bound by residues 95 to 99, 119 to 120, Lys-132, and Lys-141; these read GVVGD and TT. Zn(2+) is bound by residues Glu-174, His-238, and His-255.

Belongs to the sugar phosphate cyclases superfamily. Dehydroquinate synthase family. Co(2+) is required as a cofactor. It depends on Zn(2+) as a cofactor. The cofactor is NAD(+).

The protein localises to the cytoplasm. It carries out the reaction 7-phospho-2-dehydro-3-deoxy-D-arabino-heptonate = 3-dehydroquinate + phosphate. Its pathway is metabolic intermediate biosynthesis; chorismate biosynthesis; chorismate from D-erythrose 4-phosphate and phosphoenolpyruvate: step 2/7. Its function is as follows. Catalyzes the conversion of 3-deoxy-D-arabino-heptulosonate 7-phosphate (DAHP) to dehydroquinate (DHQ). The polypeptide is 3-dehydroquinate synthase (Chlorobium luteolum (strain DSM 273 / BCRC 81028 / 2530) (Pelodictyon luteolum)).